The following is a 257-amino-acid chain: Snake venom serine proteinase 11 (257 aa).

Positions 1–18 (MVLIRVLANLLILQLSYA) are cleaved as a signal peptide. The propeptide occupies 19–24 (QKSSEL). The Peptidase S1 domain maps to 25–248 (VVGGDECNIN…YTEWIQSIIT (224 aa)). Intrachain disulfides connect C31/C162, C49/C65, C97/C255, C141/C209, C173/C188, and C199/C224. Residues H64 and D109 each act as charge relay system in the active site. N120 carries an N-linked (GlcNAc...) asparagine glycan. S203 functions as the Charge relay system in the catalytic mechanism.

It belongs to the peptidase S1 family. Snake venom subfamily. Monomer. In terms of tissue distribution, expressed by the venom gland.

Its subcellular location is the secreted. Its function is as follows. Snake venom serine protease that may act in the hemostasis system of the prey. The protein is Snake venom serine proteinase 11 of Crotalus adamanteus (Eastern diamondback rattlesnake).